Consider the following 1038-residue polypeptide: Rap guanine nucleotide exchange factor 1 (1038 aa).

10 to 140 (RLSPLHTFSD…DILTDETPSD (131 aa)) lines the a nucleoside 3',5'-cyclic phosphate pocket. The DEP domain maps to 234–316 (TDNHQVIRDI…KTNSYYRWVQ (83 aa)). Residue 375–492 (ALSHLSTMVK…VRLKDYGEDV (118 aa)) participates in a nucleoside 3',5'-cyclic phosphate binding. Residues 516-654 (CGYSVMAGKA…DILTRIGSIR (139 aa)) form the N-terminal Ras-GEF domain. Residues 795-1028 (DSQELAHQLF…MQLSYEIEPK (234 aa)) enclose the Ras-GEF domain.

Interacts (via C-terminus) with drn-1. Expressed specifically in neurons including the nerve ring, ventral and dorsal nerve cord motor neurons and tail ganglia.

Guanine nucleotide-releasing protein. Together with GTPase drn-1, may regulate acetylcholine release at the neuromuscular junctions probably downstream of G-protein gsa-1 and adenylate cyclase acy-1. The chain is Rap guanine nucleotide exchange factor 1 (epac-1) from Caenorhabditis elegans.